Consider the following 171-residue polypeptide: Ferritin heavy chain (171 aa).

Methionine 1 is modified (N-acetylmethionine). An N-acetylthreonine; in Ferritin heavy chain, N-terminally processed modification is found at threonine 2. In terms of domain architecture, Ferritin-like diiron spans 11–160 (QNYHQDSEAA…DHITNLRKMG (150 aa)). Residues glutamate 28, glutamate 63, histidine 66, glutamate 108, and glutamine 142 each coordinate Fe cation.

This sequence belongs to the ferritin family. As to quaternary structure, oligomer of 24 subunits. There are two types of subunits: L (light) chain and H (heavy) chain. The major chain can be light or heavy, depending on the species and tissue type. The functional molecule forms a roughly spherical shell with a diameter of 12 nm and contains a central cavity into which the insoluble mineral iron core is deposited. Interacts with NCOA4; NCOA4 promotes targeting of the iron-binding ferritin complex to autolysosomes following starvation or iron depletion.

It localises to the cytoplasm. The protein resides in the lysosome. Its subcellular location is the cytoplasmic vesicle. The protein localises to the autophagosome. It carries out the reaction 4 Fe(2+) + O2 + 4 H(+) = 4 Fe(3+) + 2 H2O. Its function is as follows. Stores iron in a soluble, non-toxic, readily available form. Important for iron homeostasis. Has ferroxidase activity. Iron is taken up in the ferrous form and deposited as ferric hydroxides after oxidation. Also plays a role in delivery of iron to cells. Mediates iron uptake in capsule cells of the developing kidney. Delivery to lysosomes is mediated by the cargo receptor NCOA4 for autophagic degradation and release of iron. The chain is Ferritin heavy chain (FTH1) from Ovis aries (Sheep).